We begin with the raw amino-acid sequence, 613 residues long: Portal protein (613 aa).

A disordered region spans residues 577–613 (ATGGDHGIRQAPSARGDAEPDHAKSKPARDPPPGAGS). Residues 592 to 605 (GDAEPDHAKSKPAR) are compositionally biased toward basic and acidic residues.

Belongs to the herpesviridae portal protein family. Homododecamerizes. Interacts with terminase subunits TRM1 and TRM3.

The protein resides in the virion. The protein localises to the host nucleus. Forms a portal in the viral capsid through which viral DNA is translocated during DNA packaging. Assembles as a dodecamer at a single fivefold axe of the T=16 icosahedric capsid. Binds to the molecular motor that translocates the viral DNA, termed terminase. The protein is Portal protein of Homo sapiens (Human).